A 311-amino-acid chain; its full sequence is Burkholderia TALE-like protein 3 (311 aa).

A Cryptic repeat -1 repeat occupies 19–50 (LSPFECLKIEKHSGGADALEFISNKYDALTQV). The stretch at 51–83 (LSRADILKIACHDCAAHALQAVLDYEQVFRQRG) is one Cryptic repeat 0 repeat. 6 Core repeat repeats span residues 84-116 (FARADIIKITGNGGGAQALKAVVVHGPTLNECG), 117-149 (FSQADIVRIADNIGGAQALKAVLEHGPTLNERD), 150-182 (YSGADIVKIAGNGGGARALKAVVMHGPTLCESG), 183-215 (YSGADIVKIASNGGGAQALEAVAMHGSTLCERG), 216-248 (YCRTDIAKIAGNGGGAQALKAIVMHGPTLCERG), and 249-281 (YSRTDIVKIADNNGGAQALKAVFEHGPALTQAG). The Cryptic repeat +1 repeat unit spans residues 282–311 (RSNEDIVNMAARTGAAGQIRKMAAQLSGRQ).

Belongs to the transcription activator-like effector (TALE) family. Bat subfamily.

Functionally, does not bind DNA, probably because it has too few core repeats. The chain is Burkholderia TALE-like protein 3 from Mycetohabitans rhizoxinica (strain DSM 19002 / CIP 109453 / HKI 454) (Paraburkholderia rhizoxinica).